The chain runs to 501 residues: Ribose import ATP-binding protein RbsA (501 aa).

ABC transporter domains lie at 5–241 (LQLK…VGRK) and 252–495 (APGE…VGKL). Residue 37-44 (GENGAGKS) coordinates ATP.

It belongs to the ABC transporter superfamily. Ribose importer (TC 3.A.1.2.1) family. In terms of assembly, the complex is composed of an ATP-binding protein (RbsA), two transmembrane proteins (RbsC) and a solute-binding protein (RbsB).

It localises to the cell inner membrane. It carries out the reaction D-ribose(out) + ATP + H2O = D-ribose(in) + ADP + phosphate + H(+). Functionally, part of the ABC transporter complex RbsABC involved in ribose import. Responsible for energy coupling to the transport system. In Salmonella typhimurium (strain LT2 / SGSC1412 / ATCC 700720), this protein is Ribose import ATP-binding protein RbsA.